The sequence spans 469 residues: DNA-binding transcriptional regulator NtrC (469 aa).

The 115-residue stretch at Ile5–Ile119 folds into the Response regulatory domain. Asp54 carries the post-translational modification 4-aspartylphosphate. The Sigma-54 factor interaction domain occupies Ile140–Val369. Residues Gly168–Glu175 and Ala231–Glu240 each bind ATP. Positions Lys445–Lys464 form a DNA-binding region, H-T-H motif.

In terms of processing, phosphorylated and dephosphorylated by NtrB.

The protein localises to the cytoplasm. Its function is as follows. Member of the two-component regulatory system NtrB/NtrC, which controls expression of the nitrogen-regulated (ntr) genes in response to nitrogen limitation. Phosphorylated NtrC binds directly to DNA and stimulates the formation of open promoter-sigma54-RNA polymerase complexes. This Escherichia coli O157:H7 protein is DNA-binding transcriptional regulator NtrC (glnG).